The sequence spans 529 residues: Delayed-rectifier potassium channel regulatory subunit KCNS1 (529 aa).

Topologically, residues M1 to L217 are cytoplasmic. A helical membrane pass occupies residues P218–I239. The Extracellular portion of the chain corresponds to H240–P270. Residues V271–L293 form a helical membrane-spanning segment. The Cytoplasmic segment spans residues A294 to P304. The chain crosses the membrane as a helical span at residues L305–A322. The Extracellular segment spans residues G323–L340. A helical; Voltage-sensor transmembrane segment spans residues G341–H361. Residues S362–Y376 lie on the Cytoplasmic side of the membrane. Residues R377–Y398 form a helical membrane-spanning segment. Residues T399–I411 lie on the Extracellular side of the membrane. The helical intramembrane region spans P412–T423. Positions T424–D429 match the Selectivity filter motif. The stretch at T424–V431 is an intramembrane region. Residues P432 to K438 are Extracellular-facing. A helical membrane pass occupies residues L439–Y467. Over R468–Y529 the chain is Cytoplasmic. A disordered region spans residues G494–Y529. Over residues T502–D514 the composition is skewed to basic and acidic residues.

Belongs to the potassium channel family. S (TC 1.A.1.2) subfamily. Kv9.1/KCNS1 sub-subfamily. Heterotetramer with KCNB1. Heterotetramer with KCNB2. Does not form homomultimers.

It is found in the cell membrane. Functionally, potassium channel regulatory subunit that modulate the delayed rectifier voltage-gated potassium channel activity of KCNB1 and KCNB2 by altering their kinetics, expression levels, and shifting the half-inactivation potential to more polarized values. While it does not form functional channels on its own, it can form functional heterotetrameric channels with KCNB1 and KCNB2. Each regulatory subunit has unique regulatory properties that can lead to extensive inhibition, significant changes in kinetics, and/or substantial shifts in the voltage dependencies of the inactivation process. In Aotus nancymaae (Ma's night monkey), this protein is Delayed-rectifier potassium channel regulatory subunit KCNS1.